We begin with the raw amino-acid sequence, 622 residues long: Neuronal acetylcholine receptor subunit alpha-4 (622 aa).

Residues 1–23 (MGFLVSKGNLLLLLCASIFPAFG) form the signal peptide. The Extracellular segment spans residues 24-237 (HVETRAHAEE…ITYSFIIRRL (214 aa)). An N-linked (GlcNAc...) asparagine glycan is attached at N52. Ca(2+) contacts are provided by V71 and E73. The N-linked (GlcNAc...) asparagine glycan is linked to N102. 2 cysteine pairs are disulfide-bonded: C156–C170 and C220–C221. Residues 238–262 (PLFYTINLIIPCLLISCLTVLVFYL) form a helical membrane-spanning segment. C266 carries the S-palmitoyl cysteine lipid modification. The next 2 membrane-spanning stretches (helical) occupy residues 270 to 288 (ITLCISVLLSLTVFLLLIT) and 304 to 325 (YLLFTMIFVTLSIIITVFVLNV). Residues 326 to 595 (HHRSPRTHTM…WKYVAMVIDR (270 aa)) are Cytoplasmic-facing. 2 disordered regions span residues 380–477 (WSET…TEEG) and 497–516 (QTNGHSSASPASQRCHLNEE). Positions 390 to 407 (TTSSSPSPQSNEPSPTSS) are enriched in low complexity. Composition is skewed to polar residues over residues 450–472 (SDTQTTSISKGRSLSVQQMYSPN) and 497–508 (QTNGHSSASPAS). A helical transmembrane segment spans residues 596–614 (IFLWMFIIVCLLGTVGLFL).

This sequence belongs to the ligand-gated ion channel (TC 1.A.9) family. Acetylcholine receptor (TC 1.A.9.1) subfamily. Alpha-4/CHRNA4 sub-subfamily. In terms of assembly, neuronal AChR is composed of two different types of subunits: alpha and beta. CHRNA4 forms heteropentameric neuronal acetylcholine receptors with CHRNB2 and CHRNB4, as well as CHRNA5 and CHRNB3 as accesory subunits. Found in two major stoichiometric forms, LS (low agonist sensitivity): (CHRNA4)3:(CHRNB2)2 and HS (high agonist sensitivity): (CHRNA4)2:(CHRNB2)3, the two stoichiometric forms differ in their unitary conductance, calcium permeability, ACh sensitivity and potentiation by divalent cation. Cells produce predominantly an (CHRNA4)3:(CHRNB2)2 nAChR. The (CHRNA4)2:(CHRNB2)3 expression is selectively up-regulated by nicotine and has lower single channel conductance and calcium permeability. In the striatum, also forms CHRNA4:CHRNA6:CHRNB2 complexes. Also found in the stoichiometric form: (CHRNA4:CHRNB2)2:CHRNB3.

The protein localises to the synaptic cell membrane. It localises to the cell membrane. It catalyses the reaction Ca(2+)(in) = Ca(2+)(out). It carries out the reaction K(+)(in) = K(+)(out). The catalysed reaction is Na(+)(in) = Na(+)(out). With respect to regulation, activated by a myriad of ligands such as acetylcholine, cytisine, nicotine, choline and epibatidine. Channel potentiation by calcium is stoichiometry-selective, CHRNA4:CHRNB2 nACh receptor is achieved by calcium association with topographically distinct sites framed by anionic residues within the CHRNA4 subunit and between the CHRNA4 and CHRNB2 subunits. nAChR activity is inhibited by the antagonist alpha-conotoxins BuIA, PnIA, GID and MII, small disulfide-constrained peptides from cone snails. Its function is as follows. Component of neuronal acetylcholine receptors (nAChRs) that function as pentameric, ligand-gated cation channels with high calcium permeability among other activities. nAChRs are excitatory neurotrasnmitter receptors formed by a collection of nAChR subunits known to mediate synaptic transmission in the nervous system and the neuromuscular junction. Each nAchR subunit confers differential attributes to channel properties, including activation, deactivation and desensitization kinetics, pH sensitivity, cation permeability, and binding to allosteric modulators. CHRNA4 forms heteropentameric neuronal acetylcholine receptors with CHRNB2 and CHRNB4, as well as CHRNA5 and CHRNB3 as accesory subunits. Is the most abundant nAChR subtype expressed in the central nervous system. Found in two major stoichiometric forms,(CHRNA4)3:(CHRNB2)2 and (CHRNA4)2:(CHRNB2)3, the two stoichiometric forms differ in their unitary conductance, calcium permeability, ACh sensitivity and potentiation by divalent cation. Involved in the modulation of calcium-dependent signaling pathways, influences the release of neurotransmitters, including dopamine, glutamate and GABA. This Gallus gallus (Chicken) protein is Neuronal acetylcholine receptor subunit alpha-4 (CHRNA4).